Consider the following 271-residue polypeptide: Collectin-11 (271 aa).

Positions 1–25 are cleaved as a signal peptide; that stretch reads MVGEKLVAYMLVSVLGLALLRSVFG. The 60-residue stretch at 44 to 103 folds into the Collagen-like domain; it reads GEAGEKGEKGAPGRPGRVGPTGEQGPPGDKGQKGSPGRYGKMGPTGPKGLKGDMGDPGPK. The segment at 46–112 is disordered; it reads AGEKGEKGAP…KGPNGEPGVP (67 aa). Residues 124–148 are a coiled coil; it reads EMDIQVVQLTNELKFIKNAVAGIKE. One can recognise a C-type lectin domain in the interval 149 to 265; that stretch reads TDSKVYLLVK…CQLTMYFVCE (117 aa). 2 cysteine pairs are disulfide-bonded: Cys170-Cys264 and Cys242-Cys256. Arg200 contributes to the a carbohydrate binding site. Ca(2+) contacts are provided by Asp207, Glu211, Glu232, Asn234, Asn235, Asp238, Glu240, and Asp241. Residue Glu240 coordinates a carbohydrate. Residues Glu244 and 252–254 contribute to the a carbohydrate site; that span reads IDV. Asp253 contributes to the Ca(2+) binding site.

The protein belongs to the COLEC10/COLEC11 family. In terms of assembly, homotrimer; disulfide-linked. Interacts with MASP1; probably triggers the lectin pathway of complement.

It is found in the secreted. Functionally, lectin that plays a role in innate immunity, apoptosis and embryogenesis. Calcium-dependent lectin that binds self and non-self glycoproteins presenting high mannose oligosaccharides with at least one terminal alpha-1,2-linked mannose epitope. Primarily recognizes the terminal disaccharide of the glycan. Also recognizes a subset of fucosylated glycans and lipopolysaccharides. Plays a role in innate immunity through its ability to bind non-self sugars presented by microorganisms and to activate the complement through the recruitment of MAPS1. Also plays a role in apoptosis through its ability to bind in a calcium-independent manner the DNA present at the surface of apoptotic cells and to activate the complement in response to this binding. Finally, plays a role in development, probably serving as a guidance cue during the migration of neural crest cells and other cell types during embryogenesis. In Danio rerio (Zebrafish), this protein is Collectin-11 (colec11).